We begin with the raw amino-acid sequence, 311 residues long: Phospholipid phosphatase 3 (311 aa).

At 1–33 (MQNYKYDKAIVAESKNGGSPALNNNPRKGGSKR) the chain is on the cytoplasmic side. Position 19 is a phosphoserine (Ser19). A helical membrane pass occupies residues 34–54 (VLLICLDLFCLFMAGLPFIII). The Extracellular segment spans residues 55-85 (ETSTIKPYHRGFYCNDESIKYPQKTGETIND). The helical transmembrane segment at 86-106 (AVLTAVGIVIAILAIITGEFY) threads the bilayer. The Cytoplasmic portion of the chain corresponds to 107 to 123 (RIYYLKEKSRSTIQNPY). Positions 109–110 (YY) match the Dityrosine basolateral targeting motif motif. Residues 124–144 (VAALYKQVGCFLFGCAISQSF) form a helical membrane-spanning segment. At 145–194 (TDIAKVSIGRLRPHFLNVCNPDFSQINCSVGYIQNYRCRGEDSKVQEARK) the chain is on the extracellular side. Positions 149-157 (KVSIGRLRP) are phosphatase sequence motif I. N-linked (GlcNAc...) asparagine glycosylation is present at Asn171. An Integrin-binding motif motif is present at residues 183 to 185 (RGE). The chain crosses the membrane as a helical span at residues 195 to 215 (SFFSGHASFSMYTMLYLVLYL). Positions 197-200 (FSGH) are phosphatase sequence motif II. The Proton donors role is filled by His200. The Cytoplasmic portion of the chain corresponds to 216–226 (QARFTWRGARL). Residues 227-244 (LRPLLQFTLIMMAFYTGL) form a helical membrane-spanning segment. A phosphatase sequence motif III region spans residues 245 to 256 (SRVSDHKHHPSD). The Extracellular segment spans residues 245 to 258 (SRVSDHKHHPSDVL). Catalysis depends on His252, which acts as the Nucleophile. A helical membrane pass occupies residues 259–279 (AGFAQGALVACCIVFFVSDLF). Positions 276 to 311 (SDLFKTKTTLSLPPSAIRKDMLSPVDIDRSNHHNMV) are mediates interaction with CTNND1. The Cytoplasmic segment spans residues 280–311 (KTKTTLSLPPSAIRKDMLSPVDIDRSNHHNMV).

Belongs to the PA-phosphatase related phosphoesterase family. Forms functional homodimers and homooligomers that are not required for substrate recognition and catalytic activity. Can also form heterooligomers with other PLPP2 and PLPP3. Interacts with CTNND1; negatively regulates the PLPP3-mediated stabilization of beta-catenin/CTNNB1. In terms of processing, N-glycosylated. Contains high-mannose oligosaccharides.

The protein resides in the cell membrane. The protein localises to the basolateral cell membrane. It is found in the endoplasmic reticulum membrane. Its subcellular location is the endoplasmic reticulum-Golgi intermediate compartment membrane. It localises to the golgi apparatus membrane. The protein resides in the golgi apparatus. The protein localises to the trans-Golgi network membrane. It is found in the membrane raft. It carries out the reaction a 1,2-diacyl-sn-glycero-3-phosphate + H2O = a 1,2-diacyl-sn-glycerol + phosphate. The enzyme catalyses 1,2-dihexadecanoyl-sn-glycero-3-phosphate + H2O = 1,2-dihexadecanoyl-sn-glycerol + phosphate. The catalysed reaction is 1,2-di-(9Z-octadecenoyl)-sn-glycero-3-phosphate + H2O = 1,2-di-(9Z-octadecenoyl)-sn-glycerol + phosphate. It catalyses the reaction a monoacyl-sn-glycero-3-phosphate + H2O = a monoacylglycerol + phosphate. It carries out the reaction (9Z)-octadecenoyl-sn-glycero-3-phosphate + H2O = (9Z-octadecenoyl)-glycerol + phosphate. The enzyme catalyses sphing-4-enine 1-phosphate + H2O = sphing-4-enine + phosphate. The catalysed reaction is an N-acylsphing-4-enine 1-phosphate + H2O = an N-acylsphing-4-enine + phosphate. It catalyses the reaction N-(octanoyl)-sphing-4-enine-1-phosphate + H2O = N-octanoylsphing-4-enine + phosphate. It carries out the reaction N-(9Z-octadecenoyl)-ethanolamine phosphate + H2O = N-(9Z-octadecenoyl) ethanolamine + phosphate. Its pathway is lipid metabolism; phospholipid metabolism. Magnesium-independent phospholipid phosphatase. Insensitive to N-ethylmaleimide. Inhibited by sphingosine, zinc ions and modestly by propanolol. In terms of biological role, magnesium-independent phospholipid phosphatase of the plasma membrane that catalyzes the dephosphorylation of a variety of glycerolipid and sphingolipid phosphate esters including phosphatidate/PA, lysophosphatidate/LPA, diacylglycerol pyrophosphate/DGPP, sphingosine 1-phosphate/S1P and ceramide 1-phosphate/C1P. Also acts on N-oleoyl ethanolamine phosphate/N-(9Z-octadecenoyl)-ethanolamine phosphate, a potential physiological compound. Has both an extracellular and an intracellular phosphatase activity, allowing the hydrolysis and the cellular uptake of these bioactive lipid mediators from the milieu, regulating signal transduction in different cellular processes. Through the dephosphorylation of extracellular sphingosine-1-phosphate and the regulation of its extra- and intracellular availability, plays a role in vascular homeostasis, regulating endothelial cell migration, adhesion, survival, proliferation and the production of pro-inflammatory cytokines. By maintaining the appropriate levels of this lipid in the cerebellum, also ensure its proper development and function. Through its intracellular lipid phosphatase activity may act in early compartments of the secretory pathway, regulating the formation of Golgi to endoplasmic reticulum retrograde transport carriers. Its function is as follows. Independently of this phosphatase activity may also function in the Wnt signaling pathway and the stabilization of beta-catenin/CTNNB1, thereby regulating cell proliferation, migration and differentiation in angiogenesis or yet in tumor growth. Also plays a role in integrin-mediated cell-cell adhesion in angiogenesis. The sequence is that of Phospholipid phosphatase 3 from Bos taurus (Bovine).